We begin with the raw amino-acid sequence, 231 residues long: MSGEENPASKPTPVQDVQGDGRWMSLHHRFVADSKDKEPEVVFIGDSLVQLMHQCEIWRELFSPLHALNFGIGGDGTQHVLWRLENGELEHIRPKIVVVWVGTNNHGHTAEQVTGGIKAIVQLVNERQPQARVVVLGLLPRGQHPNPLREKNRQVNELVRAALAGHPRAHFLDADPGFVHSDGTISHHDMYDYLHLSRLGYTPVCRALHSLLLRLLAQDQGQGAPLLEPAP.

Position 2 is an N-acetylserine (serine 2). At serine 2 the chain carries Phosphoserine. Active-site residues include serine 47, aspartate 192, and histidine 195.

The protein belongs to the 'GDSL' lipolytic enzyme family. Platelet-activating factor acetylhydrolase IB beta/gamma subunits subfamily. Forms a catalytic dimer which is either homodimer (alpha1/alpha1 homodimer) or heterodimer with PAFAH1B2 (alpha1/alpha2 heterodimer). Component of the cytosolic (PAF-AH (I)) heterotetrameric enzyme, which is composed of PAFAH1B1 (beta), PAFAH1B2 (alpha2) and PAFAH1B3 (alpha1) subunits. The catalytic activity of the enzyme resides in the alpha1 (PAFAH1B3) and alpha2 (PAFAH1B2) subunits, whereas the beta subunit (PAFAH1B1) has regulatory activity. Trimer formation is not essential for the catalytic activity. Interacts with VLDLR; this interaction may modulate the Reelin pathway. In terms of tissue distribution, in the adult, expressed in brain, skeletal muscle, kidney, thymus, spleen, colon, testis, ovary and peripheral blood leukocytes. In the fetus, highest expression occurs in brain.

It is found in the cytoplasm. The enzyme catalyses a 1-O-alkyl-2-acetyl-sn-glycero-3-phosphocholine + H2O = a 1-O-alkyl-sn-glycero-3-phosphocholine + acetate + H(+). It catalyses the reaction 1-O-hexadecyl-2-acetyl-sn-glycero-3-phosphocholine + H2O = 1-O-hexadecyl-sn-glycero-3-phosphocholine + acetate + H(+). The catalysed reaction is 1-O-hexadecyl-2-acetyl-sn-glycero-3-phosphate + H2O = 1-O-hexadecyl-sn-glycero-3-phosphate + acetate + H(+). Beta subunit (PAFAH1B1) inhibits the acetylhydrolase activity of the alpha1/alpha1 catalytic homodimer. Functionally, alpha1 catalytic subunit of the cytosolic type I platelet-activating factor (PAF) acetylhydrolase (PAF-AH (I)) heterotetrameric enzyme that catalyzes the hydrolyze of the acetyl group at the sn-2 position of PAF and its analogs and modulates the action of PAF. The activity and substrate specificity of PAF-AH (I) are affected by its subunit composition. Both alpha1/alpha1 homodimer (PAFAH1B3/PAFAH1B3 homodimer) and alpha1/alpha2 heterodimer(PAFAH1B3/PAFAH1B2 heterodimer) hydrolyze 1-O-alkyl-2-acetyl-sn-glycero-3-phosphoric acid (AAGPA) more efficiently than PAF, but they have little hydrolytic activity towards 1-O-alkyl-2-acetyl-sn-glycero-3-phosphorylethanolamine (AAGPE). Plays an important role during the development of brain. The chain is Platelet-activating factor acetylhydrolase IB subunit alpha1 from Homo sapiens (Human).